The chain runs to 356 residues: Gluconolactonase (356 aa).

A signal peptide (tat-type signal) is located at residues 1–35; sequence MTTGRMSRRECLSAAVMVPIAAMTATATITGSAQA.

Homodimer. Predicted to be exported by the Tat system. The position of the signal peptide cleavage has been experimentally proven.

It is found in the periplasm. It carries out the reaction D-glucono-1,5-lactone + H2O = D-gluconate + H(+). The protein operates within carbohydrate acid metabolism; D-gluconate biosynthesis; D-gluconate from D-glucono-1,5-lactone: step 1/1. Functionally, hydrolyzes the gluconolactone formed by glucose-fructose oxidoreductase, and that formed in aerobic conditions by the glucose dehydrogenase present. This is Gluconolactonase (gnl) from Zymomonas mobilis subsp. mobilis (strain ATCC 31821 / ZM4 / CP4).